Consider the following 373-residue polypeptide: Alanine racemase (373 aa).

Lys35 functions as the Proton acceptor; specific for D-alanine in the catalytic mechanism. The residue at position 35 (Lys35) is an N6-(pyridoxal phosphate)lysine. Arg130 is a substrate binding site. Tyr253 functions as the Proton acceptor; specific for L-alanine in the catalytic mechanism. Position 305 (Met305) interacts with substrate.

Belongs to the alanine racemase family. Pyridoxal 5'-phosphate serves as cofactor.

The catalysed reaction is L-alanine = D-alanine. It functions in the pathway amino-acid biosynthesis; D-alanine biosynthesis; D-alanine from L-alanine: step 1/1. In terms of biological role, catalyzes the interconversion of L-alanine and D-alanine. May also act on other amino acids. The chain is Alanine racemase (alr) from Cupriavidus necator (strain ATCC 17699 / DSM 428 / KCTC 22496 / NCIMB 10442 / H16 / Stanier 337) (Ralstonia eutropha).